The chain runs to 107 residues: Urease subunit beta (107 aa).

Belongs to the urease beta subunit family. In terms of assembly, heterotrimer of UreA (gamma), UreB (beta) and UreC (alpha) subunits. Three heterotrimers associate to form the active enzyme.

Its subcellular location is the cytoplasm. The catalysed reaction is urea + 2 H2O + H(+) = hydrogencarbonate + 2 NH4(+). The protein operates within nitrogen metabolism; urea degradation; CO(2) and NH(3) from urea (urease route): step 1/1. The chain is Urease subunit beta from Bacillus sp. (strain TB-90).